A 331-amino-acid polypeptide reads, in one-letter code: Ketol-acid reductoisomerase (NADP(+)) (331 aa).

One can recognise a KARI N-terminal Rossmann domain in the interval 2–181 (TKVYYEDAVK…GATRAGVIET (180 aa)). Residues 25 to 28 (YGSQ), R48, S52, and 82 to 85 (DETQ) contribute to the NADP(+) site. Residue H107 is part of the active site. An NADP(+)-binding site is contributed by G133. A KARI C-terminal knotted domain is found at 182-327 (TFKEETETDL…AELREMMPFV (146 aa)). The Mg(2+) site is built by D190, E194, E226, and E230. Substrate is bound at residue S251.

The protein belongs to the ketol-acid reductoisomerase family. Mg(2+) serves as cofactor.

The enzyme catalyses (2R)-2,3-dihydroxy-3-methylbutanoate + NADP(+) = (2S)-2-acetolactate + NADPH + H(+). The catalysed reaction is (2R,3R)-2,3-dihydroxy-3-methylpentanoate + NADP(+) = (S)-2-ethyl-2-hydroxy-3-oxobutanoate + NADPH + H(+). It functions in the pathway amino-acid biosynthesis; L-isoleucine biosynthesis; L-isoleucine from 2-oxobutanoate: step 2/4. Its pathway is amino-acid biosynthesis; L-valine biosynthesis; L-valine from pyruvate: step 2/4. In terms of biological role, involved in the biosynthesis of branched-chain amino acids (BCAA). Catalyzes an alkyl-migration followed by a ketol-acid reduction of (S)-2-acetolactate (S2AL) to yield (R)-2,3-dihydroxy-isovalerate. In the isomerase reaction, S2AL is rearranged via a Mg-dependent methyl migration to produce 3-hydroxy-3-methyl-2-ketobutyrate (HMKB). In the reductase reaction, this 2-ketoacid undergoes a metal-dependent reduction by NADPH to yield (R)-2,3-dihydroxy-isovalerate. The sequence is that of Ketol-acid reductoisomerase (NADP(+)) from Listeria monocytogenes serovar 1/2a (strain ATCC BAA-679 / EGD-e).